The following is a 503-amino-acid chain: AMP phosphorylase (503 aa).

AMP is bound by residues glycine 168, 194–199 (SRAITG), and serine 203. Aspartate 256 serves as the catalytic Proton donor. AMP contacts are provided by serine 264 and lysine 288.

Belongs to the thymidine/pyrimidine-nucleoside phosphorylase family. Type 2 subfamily.

The enzyme catalyses AMP + phosphate = alpha-D-ribose 1,5-bisphosphate + adenine. It carries out the reaction CMP + phosphate = cytosine + alpha-D-ribose 1,5-bisphosphate. It catalyses the reaction UMP + phosphate = alpha-D-ribose 1,5-bisphosphate + uracil. Functionally, catalyzes the conversion of AMP and phosphate to adenine and ribose 1,5-bisphosphate (R15P). Exhibits phosphorylase activity toward CMP and UMP in addition to AMP. Functions in an archaeal AMP degradation pathway, together with R15P isomerase and RubisCO. This is AMP phosphorylase from Methanocella arvoryzae (strain DSM 22066 / NBRC 105507 / MRE50).